The sequence spans 595 residues: P2X purinoceptor 7 (595 aa).

The Cytoplasmic segment spans residues 1-22; that stretch reads MPACCSCSDVFQYETNKVTRIQ. Cys-4 carries S-palmitoyl cysteine lipidation. Residues 23 to 46 traverse the membrane as a helical segment; it reads SMNYGTIKWFFHVIIFSYVCFALV. At 47 to 328 the chain is on the extracellular side; it reads SDKLYQRKEP…ILVFGTGGKF (282 aa). 3 disulfide bridges follow: Cys-119–Cys-168, Cys-129–Cys-152, and Cys-135–Cys-162. An ADP-ribosylarginine mark is found at Arg-125 and Arg-133. Asn-187 is a glycosylation site (N-linked (GlcNAc...) asparagine). Thr-189 serves as a coordination point for ATP. 2 N-linked (GlcNAc...) asparagine glycosylation sites follow: Asn-202 and Asn-213. Cys-216 and Cys-226 are oxidised to a cystine. A glycan (N-linked (GlcNAc...) asparagine) is linked at Asn-241. Cys-260 and Cys-269 are joined by a disulfide. An N-linked (GlcNAc...) asparagine glycan is attached at Asn-284. Residues Arg-294 and Lys-311 each coordinate ATP. The chain crosses the membrane as a helical span at residues 329–353; it reads DIIQLVVYIGSTLSYFGLAAVFIDF. Ser-342 serves as a coordination point for Na(+). Tyr-343 carries the post-translational modification Phosphotyrosine. The Cytoplasmic portion of the chain corresponds to 354–595; sequence LIDTYSSNCC…GQYSGFKSPY (242 aa). Residues 360 to 377 are C-cys anchor; that stretch reads SNCCRSHIYPWCKCCQPC. Residues Cys-362, Cys-363, Cys-374, and Cys-377 are each lipidated (S-palmitoyl cysteine). Ser-390 carries the post-translational modification Phosphoserine. The cytoplasmic ballast stretch occupies residues 395–595; it reads KPTLKYVSFV…GQYSGFKSPY (201 aa). 3 residues coordinate Zn(2+): Cys-479, Cys-499, and Cys-506. Arg-546, His-547, Tyr-550, and Ala-567 together coordinate GTP. Cys-572 is a Zn(2+) binding site. GTP contacts are provided by Lys-583, Ser-589, and Gly-590.

Belongs to the P2X receptor family. Homotrimers. Interacts with LAMA3, ITGB2, ACTB, ACTN4, SVIL, MPP3, HSPA1, HSPCB, HSPA8, PIK230 and PTPRB. Interacts (via C-terminus) with EMP2. Interacts with isoform B; this interaction potentiates P2RX7 responses. Post-translationally, phosphorylation results in its inactivation. In terms of processing, ADP-ribosylation at Arg-125 is necessary and sufficient to activate P2RX7 and gate the channel. Palmitoylation of several cysteines in the C-terminal cytoplasmic tail is required for efficient localization to cell surface. Palmitoylation prevents channel desensitization by physically anchoring the palmitoylated groups to the membrane. Widely expressed with highest levels in brain and immune tissues. In terms of tissue distribution, predominant form in many tissues.

It is found in the cell membrane. It carries out the reaction Ca(2+)(in) = Ca(2+)(out). It catalyses the reaction K(+)(in) = K(+)(out). The catalysed reaction is Na(+)(in) = Na(+)(out). Activated by high extracellular ATP levels (0.1-2.5 mM). The synthetic analog 2'(3')-O-(4-benzoylbenzoyl)ATP (BzATP) acts as a potent agonist. Does not undergo desensitization, instead, undergoes a facilitation process where currents progressively increase with repetitive or prolonged agonist application. Palmitoylation prevents channel desensitization. The permeability of the P2RX7 channel is modulated by the amount of cholesterol in the plasma membrane. Its function is as follows. ATP-gated nonselective transmembrane cation channel that requires high millimolar concentrations of ATP for activation. Upon ATP binding, it rapidly opens to allow the influx of small cations Na(+) and Ca(2+), and the K(+) efflux. Also has the ability to form a large pore in the cell membrane, allowing the passage of large cationic molecules. In microglia, may mediate NADPH transport across the plasma membrane. In immune cells, P2RX7 acts as a molecular sensor in pathological inflammatory states by detecting and responding to high local concentrations of extracellar ATP. In microglial cells, P2RX7 activation leads to the release of pro-inflammatory cytokines, such as IL-1beta and IL-18, through the activation of the NLRP3 inflammasome and caspase-1. Cooperates with KCNK6 to activate NLRP3 inflammasome. Activates death pathways leading to apoptosis and autophagy. Activates death pathways leading to pyroptosis. Shows ion channel activity but no macropore function. In terms of biological role, non-functional channel. The sequence is that of P2X purinoceptor 7 (P2RX7) from Homo sapiens (Human).